The chain runs to 425 residues: Histidine--tRNA ligase (425 aa).

This sequence belongs to the class-II aminoacyl-tRNA synthetase family. Homodimer.

The protein resides in the cytoplasm. It catalyses the reaction tRNA(His) + L-histidine + ATP = L-histidyl-tRNA(His) + AMP + diphosphate + H(+). The chain is Histidine--tRNA ligase from Listeria monocytogenes serotype 4b (strain F2365).